Consider the following 559-residue polypeptide: 3-phosphoinositide-dependent protein kinase 1 (559 aa).

Tyr9 is modified (phosphotyrosine; by SRC and INSR). At Ser25 the chain carries Phosphoserine. Residues 25 to 83 are disordered; that stretch reads SPSMVRSQTEPSSSPGIPSGVSRQGSTMDGTTAEARPSTNPLQQHPAQLPPQPRKKRPE. Over residues 35–46 the composition is skewed to low complexity; sequence PSSSPGIPSGVS. The region spanning 85-345 is the Protein kinase domain; it reads FKFGKILGEG…YGPLKAHPFF (261 aa). Residues 95-97 and Lys114 each bind ATP; that span reads SFS. The PIF-pocket stretch occupies residues 116–160; the sequence is LEKRHIIKENKVPYVTRERDVMSRLDHPFFVKLYFTFQDDEKLYF. Residues 163 to 165 and Glu169 each bind ATP; that span reads SYA. The Proton acceptor role is filled by Asp208. 2 residues coordinate ATP: Glu212 and Asp226. Ser244 carries the phosphoserine modification. Lys307 is modified (N6-acetyllysine). Residue Thr357 is modified to Phosphothreonine; by MELK. Residues Tyr376 and Tyr379 each carry the phosphotyrosine; by SRC and INSR modification. Ser396 bears the Phosphoserine mark. Ser397 carries the post-translational modification Phosphoserine; by MAP3K5. Ser399 bears the Phosphoserine mark. Ser401 is modified (phosphoserine; by MAP3K5). Ser413 carries the phosphoserine modification. In terms of domain architecture, PH spans 462-553; it reads KMGPVDKRKG…EVWRQQYQSS (92 aa). Ser504 bears the Phosphoserine; by PKC/PRKCQ mark. The residue at position 516 (Thr516) is a Phosphothreonine; by autocatalysis. Residue Ser532 is modified to Phosphoserine; by PKC/PRKCQ.

This sequence belongs to the protein kinase superfamily. AGC Ser/Thr protein kinase family. PDPK1 subfamily. As to quaternary structure, homodimer in its autoinhibited state. Active as monomer. Interacts with NPRL2, PPARG, PAK1, PTK2B, GRB14, PKN1 (via C-terminus), STRAP and IKKB. The Tyr-9 phosphorylated form interacts with SRC, RASA1 and CRK (via their SH2 domains). Interacts with SGK3 in a phosphorylation-dependent manner. The tyrosine-phosphorylated form interacts with PTPN6. The Ser-244 phosphorylated form interacts with YWHAH and YWHAQ. Binds INSR in response to insulin. Interacts (via PH domain) with SMAD3, SMAD4 and SMAD7. Interacts with PKN2; the interaction stimulates PDPK1 autophosphorylation, its PI(3,4,5)P3-dependent kinase activity toward 'Ser-473' of AKT1 but also activates its kinase activity toward PRKCD and PRKCZ. Post-translationally, phosphorylation on Ser-244 in the activation loop is required for full activity. PDPK1 itself can autophosphorylate Ser-244, leading to its own activation. Autophosphorylation is inhibited by the apoptotic C-terminus cleavage product of PKN2. Tyr-9 phosphorylation is critical for stabilization of both PDPK1 and the PDPK1/SRC complex via HSP90-mediated protection of PDPK1 degradation. Angiotensin II stimulates the tyrosine phosphorylation of PDPK1 in vascular smooth muscle in a calcium- and SRC-dependent manner. Phosphorylated on Tyr-9, Tyr-376 and Tyr-379 by INSR in response to insulin. Palmitate negatively regulates autophosphorylation at Ser-244 and palmitate-induced phosphorylation at Ser-532 and Ser-504 by PKC/PRKCQ negatively regulates its ability to phosphorylate PKB/AKT1. Phosphorylation at Thr-357 by MELK partially inhibits kinase activity, the inhibition is cooperatively enhanced by phosphorylation at Ser-397 and Ser-401 by MAP3K5. In terms of processing, monoubiquitinated in the kinase domain, deubiquitinated by USP4.

The protein resides in the cytoplasm. Its subcellular location is the nucleus. The protein localises to the cell membrane. It localises to the cell junction. It is found in the focal adhesion. It catalyses the reaction L-seryl-[protein] + ATP = O-phospho-L-seryl-[protein] + ADP + H(+). It carries out the reaction L-threonyl-[protein] + ATP = O-phospho-L-threonyl-[protein] + ADP + H(+). With respect to regulation, homodimerization regulates its activity by maintaining the kinase in an autoinhibitory conformation. NPRL2 down-regulates its activity by interfering with tyrosine phosphorylation at the Tyr-9, Tyr-376 and Tyr-379 residues. The 14-3-3 protein YWHAQ acts as a negative regulator by association with the residues surrounding the Ser-244 residue. STRAP positively regulates its activity by enhancing its autophosphorylation and by stimulating its dissociation from YWHAQ. SMAD2, SMAD3, SMAD4 and SMAD7 also positively regulate its activity by stimulating its dissociation from YWHAQ. Activated by phosphorylation on Tyr-9, Tyr-376 and Tyr-379 by INSR in response to insulin. Functionally, serine/threonine kinase which acts as a master kinase, phosphorylating and activating a subgroup of the AGC family of protein kinases. Its targets include: protein kinase B (PKB/AKT1, PKB/AKT2, PKB/AKT3), p70 ribosomal protein S6 kinase (RPS6KB1), p90 ribosomal protein S6 kinase (RPS6KA1, RPS6KA2 and RPS6KA3), cyclic AMP-dependent protein kinase (PRKACA), protein kinase C (PRKCD and PRKCZ), serum and glucocorticoid-inducible kinase (SGK1, SGK2 and SGK3), p21-activated kinase-1 (PAK1), TSSK3, protein kinase PKN (PKN1 and PKN2). Plays a central role in the transduction of signals from insulin by providing the activating phosphorylation to PKB/AKT1, thus propagating the signal to downstream targets controlling cell proliferation and survival, as well as glucose and amino acid uptake and storage. Negatively regulates the TGF-beta-induced signaling by: modulating the association of SMAD3 and SMAD7 with TGF-beta receptor, phosphorylating SMAD2, SMAD3, SMAD4 and SMAD7, preventing the nuclear translocation of SMAD3 and SMAD4 and the translocation of SMAD7 from the nucleus to the cytoplasm in response to TGF-beta. Activates PPARG transcriptional activity and promotes adipocyte differentiation. Activates the NF-kappa-B pathway via phosphorylation of IKKB. The tyrosine phosphorylated form is crucial for the regulation of focal adhesions by angiotensin II. Controls proliferation, survival, and growth of developing pancreatic cells. Participates in the regulation of Ca(2+) entry and Ca(2+)-activated K(+) channels of mast cells. Essential for the motility of vascular endothelial cells (ECs) and is involved in the regulation of their chemotaxis. Plays a critical role in cardiac homeostasis by serving as a dual effector for cell survival and beta-adrenergic response. Plays an important role during thymocyte development by regulating the expression of key nutrient receptors on the surface of pre-T cells and mediating Notch-induced cell growth and proliferative responses. Provides negative feedback inhibition to toll-like receptor-mediated NF-kappa-B activation in macrophages. The chain is 3-phosphoinositide-dependent protein kinase 1 (Pdpk1) from Rattus norvegicus (Rat).